We begin with the raw amino-acid sequence, 463 residues long: A-type ATP synthase subunit B (463 aa).

It belongs to the ATPase alpha/beta chains family. Has multiple subunits with at least A(3), B(3), C, D, E, F, H, I and proteolipid K(x).

It localises to the cell membrane. In terms of biological role, component of the A-type ATP synthase that produces ATP from ADP in the presence of a proton gradient across the membrane. The B chain is a regulatory subunit. This is A-type ATP synthase subunit B from Desulfurococcus sp. (strain SY).